Consider the following 230-residue polypeptide: Phosphoribosylformylglycinamidine synthase subunit PurQ (230 aa).

The region spanning 2–226 (RVAVIVFPGS…LKTWREQNSV (225 aa)) is the Glutamine amidotransferase type-1 domain. The active-site Nucleophile is C86. Active-site residues include H195 and E197.

In terms of assembly, part of the FGAM synthase complex composed of 1 PurL, 1 PurQ and 2 PurS subunits.

It is found in the cytoplasm. It carries out the reaction N(2)-formyl-N(1)-(5-phospho-beta-D-ribosyl)glycinamide + L-glutamine + ATP + H2O = 2-formamido-N(1)-(5-O-phospho-beta-D-ribosyl)acetamidine + L-glutamate + ADP + phosphate + H(+). The enzyme catalyses L-glutamine + H2O = L-glutamate + NH4(+). It participates in purine metabolism; IMP biosynthesis via de novo pathway; 5-amino-1-(5-phospho-D-ribosyl)imidazole from N(2)-formyl-N(1)-(5-phospho-D-ribosyl)glycinamide: step 1/2. In terms of biological role, part of the phosphoribosylformylglycinamidine synthase complex involved in the purines biosynthetic pathway. Catalyzes the ATP-dependent conversion of formylglycinamide ribonucleotide (FGAR) and glutamine to yield formylglycinamidine ribonucleotide (FGAM) and glutamate. The FGAM synthase complex is composed of three subunits. PurQ produces an ammonia molecule by converting glutamine to glutamate. PurL transfers the ammonia molecule to FGAR to form FGAM in an ATP-dependent manner. PurS interacts with PurQ and PurL and is thought to assist in the transfer of the ammonia molecule from PurQ to PurL. This Brevibacillus brevis (strain 47 / JCM 6285 / NBRC 100599) protein is Phosphoribosylformylglycinamidine synthase subunit PurQ.